The sequence spans 149 residues: Large ribosomal subunit protein bL9 (149 aa).

It belongs to the bacterial ribosomal protein bL9 family.

Its function is as follows. Binds to the 23S rRNA. In Glaesserella parasuis serovar 5 (strain SH0165) (Haemophilus parasuis), this protein is Large ribosomal subunit protein bL9.